The following is a 240-amino-acid chain: Ribonuclease 3 (240 aa).

Positions 4–134 (SRQPLLDALG…LLGAIYLQHG (131 aa)) constitute an RNase III domain. Glu-44 contributes to the Mg(2+) binding site. Asp-48 is an active-site residue. Positions 120 and 123 each coordinate Mg(2+). Glu-123 is a catalytic residue. The 69-residue stretch at 161 to 229 (DWKTSLQELT…AAAAWKALEV (69 aa)) folds into the DRBM domain.

This sequence belongs to the ribonuclease III family. Homodimer. It depends on Mg(2+) as a cofactor.

The protein resides in the cytoplasm. The catalysed reaction is Endonucleolytic cleavage to 5'-phosphomonoester.. In terms of biological role, digests double-stranded RNA. Involved in the processing of primary rRNA transcript to yield the immediate precursors to the large and small rRNAs (23S and 16S). Processes some mRNAs, and tRNAs when they are encoded in the rRNA operon. Processes pre-crRNA and tracrRNA of type II CRISPR loci if present in the organism. This Mycobacterium bovis (strain ATCC BAA-935 / AF2122/97) protein is Ribonuclease 3.